A 339-amino-acid polypeptide reads, in one-letter code: Uracil nucleotide/cysteinyl leukotriene receptor (339 aa).

Residues Met-1 to Cys-36 lie on the Extracellular side of the membrane. Asn-14 carries an N-linked (GlcNAc...) asparagine glycan. A helical transmembrane segment spans residues Phe-37–Ile-57. Residues Trp-58–Thr-64 lie on the Cytoplasmic side of the membrane. A helical transmembrane segment spans residues Pro-65–Pro-85. The Extracellular portion of the chain corresponds to Thr-86 to Arg-105. Cys-104 and Cys-181 are disulfide-bonded. Residues Leu-106–Ser-126 form a helical membrane-spanning segment. Topologically, residues Ala-127 to Tyr-147 are cytoplasmic. The chain crosses the membrane as a helical span at residues Ala-148–Val-168. Over Ser-169 to Ala-195 the chain is Extracellular. Asn-176 carries N-linked (GlcNAc...) asparagine glycosylation. The chain crosses the membrane as a helical span at residues Ser-196–Ile-216. At Arg-217 to Lys-232 the chain is on the cytoplasmic side. A helical membrane pass occupies residues Ala-233–Ile-253. The Extracellular segment spans residues His-254–Arg-280. Residues Ile-281–Ala-301 form a helical membrane-spanning segment. The Cytoplasmic segment spans residues Glu-302–Leu-339.

It belongs to the G-protein coupled receptor 1 family.

Its subcellular location is the cell membrane. Its function is as follows. Dual specificity receptor for uracil nucleotides and cysteinyl leukotrienes (CysLTs). Signals through G(i) and inhibition of adenylyl cyclase. May mediate brain damage by nucleotides and CysLTs following ischemia. The polypeptide is Uracil nucleotide/cysteinyl leukotriene receptor (Mus musculus (Mouse)).